We begin with the raw amino-acid sequence, 580 residues long: mRNA cap guanine-N(7) methyltransferase (580 aa).

Polar residues-rich tracts occupy residues 1 to 17 (MSGS…TSLI) and 25 to 53 (EATS…NSDL). The tract at residues 1-222 (MSGSKQGSEK…PVEAQPYSRL (222 aa)) is disordered. Over residues 54–67 (KVTENKPKNTEMKP) the composition is skewed to basic and acidic residues. Polar residues predominate over residues 69-90 (DPNTNASTTENTPITTSNAQVS). A compositionally biased stretch (basic and acidic residues) spans 102 to 154 (REPEEAQNRYDRYVPRVDNRRRGEPRVAEVRQDPRYAKYLRQDQEERRIRRPD). Acidic residues predominate over residues 191 to 214 (ESEENGDEQQGDDEEETPGNEEPV). Residues 271–579 (SPIYKLRNFN…FYLGFAFEKL (309 aa)) form the mRNA cap 0 methyltransferase domain. 280–281 (NN) is a binding site for mRNA. K284, C308, D330, D376, Q406, and Y411 together coordinate S-adenosyl-L-methionine.

This sequence belongs to the class I-like SAM-binding methyltransferase superfamily. mRNA cap 0 methyltransferase family.

Its subcellular location is the nucleus. The catalysed reaction is a 5'-end (5'-triphosphoguanosine)-ribonucleoside in mRNA + S-adenosyl-L-methionine = a 5'-end (N(7)-methyl 5'-triphosphoguanosine)-ribonucleoside in mRNA + S-adenosyl-L-homocysteine. Its function is as follows. Responsible for methylating the 5'-cap structure of mRNAs. This chain is mRNA cap guanine-N(7) methyltransferase (ABD1), found in Meyerozyma guilliermondii (strain ATCC 6260 / CBS 566 / DSM 6381 / JCM 1539 / NBRC 10279 / NRRL Y-324) (Yeast).